Consider the following 618-residue polypeptide: Membrane protein insertase YidC (618 aa).

The next 6 helical transmembrane spans lie at 3–23, 363–383, 439–459, 478–498, 520–540, and 545–565; these read KNTI…SFLS, WGLS…IVVF, LPML…PSAI, FITF…FCLL, PQMA…LFVL, and SGLN…MIIL.

Belongs to the OXA1/ALB3/YidC family. Type 1 subfamily. In terms of assembly, interacts with the Sec translocase complex via SecD. Specifically interacts with transmembrane segments of nascent integral membrane proteins during membrane integration.

It localises to the cell inner membrane. In terms of biological role, required for the insertion and/or proper folding and/or complex formation of integral membrane proteins into the membrane. Involved in integration of membrane proteins that insert both dependently and independently of the Sec translocase complex, as well as at least some lipoproteins. Aids folding of multispanning membrane proteins. The protein is Membrane protein insertase YidC of Bacteroides fragilis (strain ATCC 25285 / DSM 2151 / CCUG 4856 / JCM 11019 / LMG 10263 / NCTC 9343 / Onslow / VPI 2553 / EN-2).